The sequence spans 207 residues: Large ribosomal subunit protein uL4 (207 aa).

A disordered region spans residues 49 to 78 (HAVKNRSAVSGGGRKPWRQKGTGRARQGSI).

It belongs to the universal ribosomal protein uL4 family. Part of the 50S ribosomal subunit.

Functionally, one of the primary rRNA binding proteins, this protein initially binds near the 5'-end of the 23S rRNA. It is important during the early stages of 50S assembly. It makes multiple contacts with different domains of the 23S rRNA in the assembled 50S subunit and ribosome. Forms part of the polypeptide exit tunnel. The polypeptide is Large ribosomal subunit protein uL4 (Streptococcus equi subsp. zooepidemicus (strain MGCS10565)).